The chain runs to 196 residues: Probable DNA-directed RNA polymerase subunit delta (196 aa).

The HTH HARE-type domain occupies 14–81; sequence LSMIEVAHEI…GDNVWGLRSW (68 aa). The segment covering 119 to 150 has biased composition (acidic residues); it reads DDDDVIDYDDDDPEDEDLDNDYDDEDDDDDEG. The segment at 119 to 196 is disordered; the sequence is DDDDVIDYDD…DADLDEENQD (78 aa). Positions 151-161 are enriched in basic and acidic residues; the sequence is SHELKQYTKDL. Acidic residues-rich tracts occupy residues 162–176 and 186–196; these read DDID…ELAD and SDADLDEENQD.

This sequence belongs to the RpoE family. RNAP is composed of a core of 2 alpha, a beta and a beta' subunits. The core is associated with a delta subunit and one of several sigma factors.

Functionally, participates in both the initiation and recycling phases of transcription. In the presence of the delta subunit, RNAP displays an increased specificity of transcription, a decreased affinity for nucleic acids, and an increased efficiency of RNA synthesis because of enhanced recycling. The sequence is that of Probable DNA-directed RNA polymerase subunit delta from Ligilactobacillus salivarius (strain UCC118) (Lactobacillus salivarius).